The primary structure comprises 88 residues: Synaptonemal complex central element protein 3 (88 aa).

A coiled-coil region spans residues Glu8 to Lys75.

Homodimer. Can form higher-order homooligomers. Interacts with SYCP1 (via tetrameric core); the interaction remodels SYCP1 homotetramers to 2:1 heterotrimers with SYCE3. SYCP1/SYCE3 heterotrimers form lattice assemblies as part of the mature synaptonemal complex via both lateral and head-to-head interactions. Interacts with the SYCE1-SIX6OS1 complex; the interaction recruits the SYCE1-SIX6OS1 complex to the central element of the synaptonemal complex. Interacts with the SYCE2-TEX12 complex; the interaction promotes fibrous assembly of SYCE2-TEX12 as part of the synaptonemal complex central element. Interacts with SYCE1. Interacts with SYCE2. Interacts with proteasome subunit PSMA8; to participate in meiosis progression during spermatogenesis. Interacts with SPO16. As to expression, expression is restricted to spermatocytes and is absent in spermatogonia, spermatids and spermatogonia (at protein level). Expressed in adult testis and embryonic ovary. Expressed in the convoluted seminiferous tubules in spermatogonia and spermatocytes.

It is found in the nucleus. It localises to the chromosome. Its function is as follows. Major component of the transverse central element of synaptonemal complexes (SCS), formed between homologous chromosomes during meiotic prophase. Required for the assembly of the central element of the synaptonemal complex during meiosis, via remodeling of SYCP1 lattice structures and promoting recruitment of SYCE2-TEX12 and SYCE1-SIX60S1 complexes. Required for chromosome loading of the central element-specific SCS proteins, and for initiating synapsis between homologous chromosomes. Chromosome loading appears to require SYCP1. Required for fertility and normal testis development. May play a role in apoptosis of spermatogenic cells and pathogenesis of cryptorchidism. The polypeptide is Synaptonemal complex central element protein 3 (Mus musculus (Mouse)).